The sequence spans 944 residues: Valine--tRNA ligase (944 aa).

The 'HIGH' region signature appears at 43 to 53 (PNVTGTLHMGH). The 'KMSKS' region motif lies at 550–554 (KMSKS). Residue Lys-553 coordinates ATP. The stretch at 878–942 (LVDMDAERTR…QLTGLREQRA (65 aa)) forms a coiled coil.

Belongs to the class-I aminoacyl-tRNA synthetase family. ValS type 1 subfamily. As to quaternary structure, monomer.

Its subcellular location is the cytoplasm. The catalysed reaction is tRNA(Val) + L-valine + ATP = L-valyl-tRNA(Val) + AMP + diphosphate. Functionally, catalyzes the attachment of valine to tRNA(Val). As ValRS can inadvertently accommodate and process structurally similar amino acids such as threonine, to avoid such errors, it has a 'posttransfer' editing activity that hydrolyzes mischarged Thr-tRNA(Val) in a tRNA-dependent manner. The polypeptide is Valine--tRNA ligase (Xanthomonas axonopodis pv. citri (strain 306)).